The primary structure comprises 385 residues: Effector protein hopAB3 (385 aa).

3 disordered regions span residues 1–61 (MVGI…AGRP), 73–139 (TREW…SPLY), and 215–293 (ADSQ…PRIN). Positions 1–333 (MVGISGRAGP…INMEDLRAAL (333 aa)) are host recognition. Over residues 217 to 234 (SQQAARAPARTPPRSSVR) the composition is skewed to low complexity. Polar residues-rich tracts occupy residues 245–256 (ATESSSGSNQRS) and 265–283 (MTSN…TSQR).

It belongs to the HopAB family. Interacts physically with plant cell Pto.

The protein localises to the secreted. In terms of biological role, effector protein involved in gene-for-gene resistance in tomato plants. It is recognized by the host Pto resistance protein and elicits Pto and Prf-dependent hypersensitive response (HR) and programmed cell death (PCD), resulting in host immunity. In susceptible plants, promotes virulence, in part, by enhancing the development of disease symptoms and bacterial growth. The chain is Effector protein hopAB3 (hopAB3) from Pseudomonas syringae pv. maculicola.